Reading from the N-terminus, the 418-residue chain is Serine hydroxymethyltransferase 2 (418 aa).

(6S)-5,6,7,8-tetrahydrofolate-binding positions include Leu121 and 125-127 (GHL). N6-(pyridoxal phosphate)lysine is present on Lys230. 355–357 (SPF) provides a ligand contact to (6S)-5,6,7,8-tetrahydrofolate.

Belongs to the SHMT family. Homodimer. Pyridoxal 5'-phosphate serves as cofactor.

The protein resides in the cytoplasm. The catalysed reaction is (6R)-5,10-methylene-5,6,7,8-tetrahydrofolate + glycine + H2O = (6S)-5,6,7,8-tetrahydrofolate + L-serine. It participates in one-carbon metabolism; tetrahydrofolate interconversion. The protein operates within amino-acid biosynthesis; glycine biosynthesis; glycine from L-serine: step 1/1. In terms of biological role, catalyzes the reversible interconversion of serine and glycine with tetrahydrofolate (THF) serving as the one-carbon carrier. This reaction serves as the major source of one-carbon groups required for the biosynthesis of purines, thymidylate, methionine, and other important biomolecules. Also exhibits THF-independent aldolase activity toward beta-hydroxyamino acids, producing glycine and aldehydes, via a retro-aldol mechanism. This Pseudomonas aeruginosa (strain ATCC 15692 / DSM 22644 / CIP 104116 / JCM 14847 / LMG 12228 / 1C / PRS 101 / PAO1) protein is Serine hydroxymethyltransferase 2.